A 799-amino-acid polypeptide reads, in one-letter code: Integrin beta-1 (799 aa).

A signal peptide spans 1-20 (MNLQLVFWIGLISLICSVFG). The Extracellular segment spans residues 21 to 729 (QTDKNRCLKA…ETPDCPTGPD (709 aa)). In terms of domain architecture, PSI spans 26 to 76 (RCLKANAKSCGECIQAGPNCGWCTNTTFLQEGMPTSARCDDLEALKKKGCH). Cystine bridges form between C27-C45, C35-C465, C38-C64, C48-C75, C207-C213, C261-C301, C401-C415, C435-C463, C467-C487, C478-C490, C492-C501, C503-C534, C517-C532, C526-C537, C539-C554, C556-C577, C561-C575, C569-C580, C582-C591, C593-C616, C600-C614, C608-C619, C621-C631, C634-C637, C641-C692, C647-C666, C650-C662, and C700-C724. 3 N-linked (GlcNAc...) asparagine glycosylation sites follow: N50, N94, and N97. A VWFA domain is found at 140-378 (DYPIDLYYLM…QLIIDAYNSL (239 aa)). Residues S152 and S154 each coordinate Mg(2+). S154, D157, D158, and E189 together coordinate Ca(2+). Positions 207 to 213 (CTSEQNC) are CX3CL1-binding. N212 is a glycosylation site (N-linked (GlcNAc...) asparagine). N244, D246, P248, and E249 together coordinate Ca(2+). Residue E249 coordinates Mg(2+). Residue N269 is glycosylated (N-linked (GlcNAc...) asparagine). A CX3CL1-binding region spans residues 295-314 (LPNDGQCHLENNVYTMSHYY). G362 contacts Ca(2+). N-linked (GlcNAc...) asparagine glycosylation is found at N363, N406, and N417. The interval 383 to 466 (ILENSKLPDG…VVLQFICKCN (84 aa)) is interaction with TMEM182. 4 consecutive I-EGF domains span residues 467-502 (CQSH…RHCE), 503-555 (CSTD…KFCE), 556-592 (CDNF…SACD), and 593-632 (CSLD…PTCE). N-linked (GlcNAc...) asparagine glycosylation occurs at N482. Residue N521 is glycosylated (N-linked (GlcNAc...) asparagine). The N-linked (GlcNAc...) asparagine glycan is linked to N585. Residue N670 is glycosylated (N-linked (GlcNAc...) asparagine). The chain crosses the membrane as a helical span at residues 730–752 (IIPIVAGVVAGIVLIGLALLLIW). Residues 753–799 (KLLMIIHDRREFAKFEKEKMNAKWDTGENPIYKSAVTTVVNPKYEGK) lie on the Cytoplasmic side of the membrane. Residues 763 to 768 (EFAKFE) are signal for sorting from recycling endosomes; interaction with ACAP1. Position 778 is a phosphothreonine (T778). Y784 is subject to Phosphotyrosine. Residue S786 is modified to Phosphoserine. The interval 786-793 (SAVTTVVN) is interaction with ITGB1BP1. Position 790 is a phosphothreonine (T790). Position 795 is an N6-acetyllysine; alternate (K795). A Glycyl lysine isopeptide (Lys-Gly) (interchain with G-Cter in SUMO1); alternate cross-link involves residue K795.

It belongs to the integrin beta chain family. Interacts with seprase FAP (seprase); the interaction occurs at the cell surface of invadopodia membrane in a collagen-dependent manner. Heterodimer of an alpha and a beta subunit. Beta-1 associates with either alpha-1, alpha-2, alpha-3, alpha-4, alpha-5, alpha-6, alpha-7, alpha-8, alpha-9, alpha-10, alpha-11 or alpha-V. ITGA6:ITGB1 is found in a complex with CD9; interaction takes place in oocytes and is involved in sperm-egg fusion. Binds LGALS3BP and NMRK2, when associated with alpha-7, but not with alpha-5. Interacts with FLNA, FLNB, FLNC and RANBP9. Interacts with KRT1 in the presence of RACK1 and SRC. Interacts with JAML; integrin alpha-4/beta-1 may regulate leukocyte to endothelial cells adhesion by controlling JAML homodimerization. Interacts with RAB21. Interacts (via the cytoplasmic region) with RAB25 (via the hypervariable C-terminal region). Interacts with MYO10. Interacts with ITGB1BP1 (via C-terminal region); the interaction is a prerequisite for focal adhesion disassembly. Interacts with TLN1; the interaction is prevented by competitive binding of ITGB1BP1. Interacts with ACAP1; required for ITGB1 recycling. Interacts with ASAP3. Interacts with FERMT2; the interaction is inhibited in presence of ITGB1BP1. Interacts with DAB2. Interacts with FGR and HCK. Interacts with alpha-7A and alpha-7B in adult skeletal muscle. Interacts with alpha-7B in cardiomyocytes of adult heart. Interacts with EMP2; the interaction may be direct or indirect and ITGB1 has a heterodimer form. ITGA5:ITGB1 interacts with CCN3. ITGA4:ITGB1 is found in a ternary complex with CX3CR1 and CX3CL1. ITGA5:ITGB1 interacts with FBN1. ITGA5:ITGB1 acts as a receptor for fibronectin FN1 and mediates R-G-D-dependent cell adhesion to FN1. ITGA5:ITGB1 interacts with IL1B. Interacts with MDK. ITGA4:ITGB1 interacts with MDK; this interaction mediates MDK-induced osteoblast cells migration through PXN phosphorylation. ITGA6:ITGB1 interacts with MDK; this interaction mediates MDK-induced neurite-outgrowth. ITGA5:ITGB1 interacts with ACE2. Interacts with TMEM182 and LAMB1. Interacts with tensin TNS3; TNS3 also interacts with PEAK1, thus acting as an adapter molecule to bridge the association of PEAK1 with ITGB1. Interacts with tensin TNS4; the interaction displaces tensin TNS3 from the ITGB1 cytoplasmic tail and promotes ITGB1 stability. Integrin ITGA9:ITGB1 interacts with SPP1/OPN (via N-terminus). Integrin ITGA9:ITGB1 interacts with TNC/TNFN3 (via the 3rd Fibronectin type-III domain). Integrins ITGA4:ITGB1 and ITGA9:ITGB1 interact with SVEP1 (via Sushi domain 21); thereby inhibit Ca(2+) intracellular signaling and as a result repress vasocontraction. ITGA4:ITGB1 and ITGA5:ITGB1 interacts with SELP. ITGA5:ITGB1 interacts with IGFBP1. ITGA4:ITGB1 interacts with BCAM. Interacts with ADGRG6.

The protein localises to the cell membrane. The protein resides in the cell projection. Its subcellular location is the invadopodium membrane. It is found in the ruffle membrane. It localises to the recycling endosome. The protein localises to the melanosome. The protein resides in the lamellipodium. Its subcellular location is the ruffle. It is found in the cell junction. It localises to the focal adhesion. Integrins alpha-1/beta-1, alpha-2/beta-1, alpha-10/beta-1 and alpha-11/beta-1 are receptors for collagen. Integrins alpha-1/beta-1 and alpha-2/beta-2 recognize the proline-hydroxylated sequence G-F-P-G-E-R in collagen. Integrins alpha-2/beta-1, alpha-3/beta-1, alpha-4/beta-1, alpha-5/beta-1, alpha-8/beta-1, alpha-10/beta-1, alpha-11/beta-1 and alpha-V/beta-1 are receptors for fibronectin. Alpha-4/beta-1 recognizes one or more domains within the alternatively spliced CS-1 and CS-5 regions of fibronectin. Integrin alpha-5/beta-1 is a receptor for fibrinogen. Integrin alpha-1/beta-1, alpha-2/beta-1, alpha-6/beta-1 and alpha-7/beta-1 are receptors for lamimin. Integrin alpha-6/beta-1 (ITGA6:ITGB1) is present in oocytes and is involved in sperm-egg fusion. Integrin alpha-4/beta-1 is a receptor for VCAM1 and recognizes the sequence Q-I-D-S in VCAM1. Integrin alpha-9/beta-1 is a receptor for VCAM1, cytotactin and osteopontin. It recognizes the sequence A-E-I-D-G-I-E-L in cytotactin. Integrin alpha-3/beta-1 is a receptor for epiligrin, thrombospondin and CSPG4. Integrin alpha-3/beta-1 provides a docking site for FAP (seprase) at invadopodia plasma membranes in a collagen-dependent manner and hence may participate in the adhesion, formation of invadopodia and matrix degradation processes, promoting cell invasion. Alpha-3/beta-1 may mediate with LGALS3 the stimulation by CSPG4 of endothelial cells migration. Integrin alpha-V/beta-1 is a receptor for vitronectin. Beta-1 integrins recognize the sequence R-G-D in a wide array of ligands. When associated with alpha-7/beta-1 integrin, regulates cell adhesion and laminin matrix deposition. Involved in promoting endothelial cell motility and angiogenesis. Involved in osteoblast compaction through the fibronectin fibrillogenesis cell-mediated matrix assembly process and the formation of mineralized bone nodules. May be involved in up-regulation of the activity of kinases such as PKC via binding to KRT1. Together with KRT1 and RACK1, serves as a platform for SRC activation or inactivation. Plays a mechanistic adhesive role during telophase, required for the successful completion of cytokinesis. ITGA4:ITGB1 binds to fractalkine (CX3CL1) and may act as its coreceptor in CX3CR1-dependent fractalkine signaling. ITGA4:ITGB1 and ITGA5:ITGB1 bind to PLA2G2A via a site (site 2) which is distinct from the classical ligand-binding site (site 1) and this induces integrin conformational changes and enhanced ligand binding to site 1. ITGA5:ITGB1 acts as a receptor for fibrillin-1 (FBN1) and mediates R-G-D-dependent cell adhesion to FBN1. ITGA5:ITGB1 is a receptor for IL1B and binding is essential for IL1B signaling. ITGA5:ITGB3 is a receptor for soluble CD40LG and is required for CD40/CD40LG signaling. Plays an important role in myoblast differentiation and fusion during skeletal myogenesis. ITGA9:ITGB1 may play a crucial role in SVEP1/polydom-mediated myoblast cell adhesion. Integrins ITGA9:ITGB1 and ITGA4:ITGB1 repress PRKCA-mediated L-type voltage-gated channel Ca(2+) influx and ROCK-mediated calcium sensitivity in vascular smooth muscle cells via their interaction with SVEP1, thereby inhibit vasocontraction. The protein is Integrin beta-1 (Itgb1) of Rattus norvegicus (Rat).